A 196-amino-acid polypeptide reads, in one-letter code: Small nuclear ribonucleoprotein-associated protein B (196 aa).

Positions 7–101 (AHSSRLANLI…ILSTVVEDKP (95 aa)) constitute a Sm domain. The Nuclear localization signal signature appears at 105–132 (KKERLVRDKKEKKQAQKQTKLRKEKEKK). Over residues 108–118 (RLVRDKKEKKQ) the composition is skewed to basic and acidic residues. A disordered region spans residues 108-196 (RLVRDKKEKK…FQPPPGFKRK (89 aa)). The span at 140–181 (NTANAKHTSSNSREIAQPSSSRYNGGNDNIGANRSRFNNEAP) shows a compositional bias: polar residues.

It belongs to the snRNP SmB/SmN family. Component of the Sm core complex, present in spliceosomal snRNP U1, U2, U4/U6 and U5. The core complex contains SMB1, SMD1, SMD2, SMD3, SME1, SMX3 and SMX2 (Sm proteins B, D1, D2, D3, E, F and G, respectively), and is probably a heptameric ring structure. SMB1 specifically interacts with SMD3. Belongs to the CWC complex (or CEF1-associated complex), a spliceosome sub-complex reminiscent of a late-stage spliceosome composed of the U2, U5 and U6 snRNAs and at least BUD13, BUD31, BRR2, CDC40, CEF1, CLF1, CUS1, CWC2, CWC15, CWC21, CWC22, CWC23, CWC24, CWC25, CWC27, ECM2, HSH155, IST3, ISY1, LEA1, MSL1, NTC20, PRP8, PRP9, PRP11, PRP19, PRP21, PRP22, PRP45, PRP46, SLU7, SMB1, SMD1, SMD2, SMD3, SMX2, SMX3, SNT309, SNU114, SPP2, SYF1, SYF2, RSE1 and YJU2. Component of the U4/U6-U5 tri-snRNP complex composed of the U4, U6 and U5 snRNAs and at least PRP3, PRP4, PRP6, PRP8, PRP18, PRP38, SNU13, SNU23, SNU66, SNU114, SPP381, SMB1, SMD1, SMD2, SMD3, SMX2, SMX3, LSM2, LSM3, LSM4, LSM5, LSM6, LSM7, LSM8, BRR2 and DIB1. Interacts with the trimethylguanosine synthase TGS1.

The protein resides in the nucleus. It is found in the cytoplasm. In terms of biological role, plays a role in pre-mRNA splicing as a core component of the spliceosomal U1, U2, U4 and U5 small nuclear ribonucleoproteins (snRNPs), the building blocks of the spliceosome. The chain is Small nuclear ribonucleoprotein-associated protein B (SMB1) from Saccharomyces cerevisiae (strain ATCC 204508 / S288c) (Baker's yeast).